The chain runs to 309 residues: Taste receptor type 2 member 8 (309 aa).

At 1-7 (MFSPADN) the chain is on the extracellular side. The helical transmembrane segment at 8-28 (IFIILITGEFILGILGNGYIA) threads the bilayer. The Cytoplasmic portion of the chain corresponds to 29-50 (LVNWIDWIKKKKISTTDYILTN). The chain crosses the membrane as a helical span at residues 51 to 71 (LVISRICLISVIVVNGIVTVL). Topologically, residues 72 to 82 (YPDVYTKSKLQ) are extracellular. The helical transmembrane segment at 83 to 103 (IAISTFWTFANYLNMWFTTCL) threads the bilayer. Over 104–131 (NVFYFLKIANSSHPLFLWLKQKIDMVVR) the chain is Cytoplasmic. A helical membrane pass occupies residues 132 to 152 (WILLGCFAISLLVSLIIAIVL). The Extracellular segment spans residues 153–184 (SRDYRFHAIAKHKRNITEMFHVSKMLYFEPLT). A glycan (N-linked (GlcNAc...) asparagine) is linked at asparagine 167. A helical membrane pass occupies residues 185–205 (LFNLLAIVPFIVSLMSFFLLV). The Cytoplasmic portion of the chain corresponds to 206–239 (RSLQRHTKQIKLYATGGRDPSTEAHVRAIKTMTS). A helical membrane pass occupies residues 240-260 (FIFFFFLYYITSLLVTFSYLM). The Extracellular portion of the chain corresponds to 261–266 (TKYKLA). The chain crosses the membrane as a helical span at residues 267 to 287 (MAFGEIVAILYPSGHSFILII). Over 288–309 (LNNKLRQASVRMLTCIKITCVI) the chain is Cytoplasmic.

Belongs to the G-protein coupled receptor T2R family.

It localises to the membrane. In terms of biological role, receptor that may play a role in the perception of bitterness and is gustducin-linked. May play a role in sensing the chemical composition of the gastrointestinal content. The activity of this receptor may stimulate alpha gustducin, mediate PLC-beta-2 activation and lead to the gating of TRPM5. In Pongo pygmaeus (Bornean orangutan), this protein is Taste receptor type 2 member 8 (TAS2R8).